Consider the following 593-residue polypeptide: Probable 5'-nucleotidase (593 aa).

A signal peptide spans 1 to 21 (MKRFIPHRVIHAVCIGLALVG). A lipid anchor (N-palmitoyl cysteine) is attached at C22. C22 carries the S-diacylglycerol cysteine lipid modification. Residues D41, H43, D91, N123, and H224 each contribute to the a divalent metal cation site. Substrate-binding positions include F456 and 539 to 545 (YIARGKD).

The protein belongs to the 5'-nucleotidase family. It depends on a divalent metal cation as a cofactor.

The protein resides in the cell membrane. It catalyses the reaction a ribonucleoside 5'-phosphate + H2O = a ribonucleoside + phosphate. This Treponema pallidum (strain Nichols) protein is Probable 5'-nucleotidase.